A 133-amino-acid polypeptide reads, in one-letter code: UPF0146 protein MTH_1000 (133 aa).

The protein belongs to the UPF0146 family.

This Methanothermobacter thermautotrophicus (strain ATCC 29096 / DSM 1053 / JCM 10044 / NBRC 100330 / Delta H) (Methanobacterium thermoautotrophicum) protein is UPF0146 protein MTH_1000.